Reading from the N-terminus, the 380-residue chain is Cytochrome b (380 aa).

Helical transmembrane passes span 34-54 (FGSLLGLCLITQILTGLFLAM), 78-99 (WLLRNVHANGASLFFICMYCHI), 114-134 (WNVGVILFLVTVLTAFVGYVL), and 179-199 (FFAFHFLFPFIIAALAIIDLV). 2 residues coordinate heme b: histidine 84 and histidine 98. A heme b-binding site is contributed by histidine 183. A ubiquinone is bound at residue histidine 202. A run of 4 helical transmembrane segments spans residues 227–247 (TKDTVGFIALIAALFVLALLF), 289–309 (LGGVIALVAAILVLFLMPLLN), 321–341 (LSQATFWILVATFFVLTWIGS), and 348–369 (FVLIGQIASLLYFSLFIFGFPL).

The protein belongs to the cytochrome b family. The main subunits of complex b-c1 are: cytochrome b, cytochrome c1 and the Rieske protein. It depends on heme b as a cofactor.

It localises to the mitochondrion inner membrane. In terms of biological role, component of the ubiquinol-cytochrome c reductase complex (complex III or cytochrome b-c1 complex) that is part of the mitochondrial respiratory chain. The b-c1 complex mediates electron transfer from ubiquinol to cytochrome c. Contributes to the generation of a proton gradient across the mitochondrial membrane that is then used for ATP synthesis. This chain is Cytochrome b (MT-CYB), found in Paracentrotus lividus (Common sea urchin).